A 419-amino-acid chain; its full sequence is UDP-N-acetylglucosamine 1-carboxyvinyltransferase (419 aa).

Lys-22–Asn-23 serves as a coordination point for phosphoenolpyruvate. Arg-91 is a UDP-N-acetyl-alpha-D-glucosamine binding site. Catalysis depends on Cys-115, which acts as the Proton donor. Residue Cys-115 is modified to 2-(S-cysteinyl)pyruvic acid O-phosphothioketal. Residues Arg-120–Leu-124, Lys-160–Val-163, Asp-305, and Val-327 contribute to the UDP-N-acetyl-alpha-D-glucosamine site.

It belongs to the EPSP synthase family. MurA subfamily.

The protein localises to the cytoplasm. The catalysed reaction is phosphoenolpyruvate + UDP-N-acetyl-alpha-D-glucosamine = UDP-N-acetyl-3-O-(1-carboxyvinyl)-alpha-D-glucosamine + phosphate. Its pathway is cell wall biogenesis; peptidoglycan biosynthesis. In terms of biological role, cell wall formation. Adds enolpyruvyl to UDP-N-acetylglucosamine. This chain is UDP-N-acetylglucosamine 1-carboxyvinyltransferase, found in Escherichia coli O157:H7.